Consider the following 452-residue polypeptide: tRNA modification GTPase MnmE (452 aa).

(6S)-5-formyl-5,6,7,8-tetrahydrofolate contacts are provided by Arg21, Glu78, and Lys118. The 162-residue stretch at 214–375 (GMKVVIAGRP…LREHLKQAMG (162 aa)) folds into the TrmE-type G domain. Asn224 contributes to the K(+) binding site. GTP is bound by residues 224-229 (NAGKSS), 243-249 (TDIAGTT), and 268-271 (DTAG). Residue Ser228 participates in Mg(2+) binding. Thr243, Ile245, and Thr248 together coordinate K(+). Thr249 provides a ligand contact to Mg(2+). Lys452 contributes to the (6S)-5-formyl-5,6,7,8-tetrahydrofolate binding site.

This sequence belongs to the TRAFAC class TrmE-Era-EngA-EngB-Septin-like GTPase superfamily. TrmE GTPase family. Homodimer. Heterotetramer of two MnmE and two MnmG subunits. It depends on K(+) as a cofactor.

The protein localises to the cytoplasm. Exhibits a very high intrinsic GTPase hydrolysis rate. Involved in the addition of a carboxymethylaminomethyl (cmnm) group at the wobble position (U34) of certain tRNAs, forming tRNA-cmnm(5)s(2)U34. The chain is tRNA modification GTPase MnmE from Haemophilus influenzae (strain PittEE).